Reading from the N-terminus, the 257-residue chain is Uracil phosphoribosyltransferase homolog (257 aa).

GTP contacts are provided by residues Arg81, Arg90, and 124–127 (EKGN). Arg134 serves as a coordination point for 5-phospho-alpha-D-ribose 1-diphosphate. The GTP site is built by Arg151 and Arg180. Residue 186-194 (YPILSTGNT) participates in 5-phospho-alpha-D-ribose 1-diphosphate binding. Position 247–249 (247–249 (THF)) interacts with uracil.

The protein belongs to the UPRTase family.

The protein localises to the cytoplasm. Its subcellular location is the nucleus. The sequence is that of Uracil phosphoribosyltransferase homolog (uprt) from Danio rerio (Zebrafish).